We begin with the raw amino-acid sequence, 455 residues long: Golgi pH regulator (455 aa).

Transmembrane regions (helical) follow at residues 5 to 25 and 46 to 66; these read IDSS…WLFF and VTFA…LGVL. N-linked (GlcNAc...) asparagine glycosylation occurs at Asn67. The next 3 helical transmembrane spans lie at 79–99, 111–131, and 150–170; these read LCVI…YFVV, LFAC…GDPF, and VGVI…VNCP. N-linked (GlcNAc...) asparagine glycosylation is found at Asn180 and Asn243. 4 helical membrane passes run 290 to 310, 343 to 363, 378 to 398, and 425 to 445; these read GYFF…NIVF, ISFI…LITL, VIVL…VLLI, and WFDV…YLAH.

The protein belongs to the Golgi pH regulator (TC 1.A.38) family. Homotrimer.

The protein resides in the golgi apparatus membrane. The enzyme catalyses iodide(out) = iodide(in). It catalyses the reaction chloride(in) = chloride(out). It carries out the reaction bromide(in) = bromide(out). The catalysed reaction is fluoride(in) = fluoride(out). Its function is as follows. Voltage-gated channel that enables the transfer of anions such as iodide, chloride, bromide and fluoride which may function in counter-ion conductance and participates in Golgi acidification. The protein is Golgi pH regulator of Gallus gallus (Chicken).